Consider the following 414-residue polypeptide: 3-phosphoshikimate 1-carboxyvinyltransferase (414 aa).

Residues Lys20, Ser21, and Arg25 each contribute to the 3-phosphoshikimate site. Lys20 provides a ligand contact to phosphoenolpyruvate. Positions 85 and 113 each coordinate phosphoenolpyruvate. 3-phosphoshikimate is bound by residues Ser154, Ser155, Gln156, Ser181, Asp296, and Lys323. Residue Gln156 participates in phosphoenolpyruvate binding. Residue Asp296 is the Proton acceptor of the active site. Residues Arg327, Arg371, and Lys395 each coordinate phosphoenolpyruvate.

It belongs to the EPSP synthase family. In terms of assembly, monomer.

It localises to the cytoplasm. It carries out the reaction 3-phosphoshikimate + phosphoenolpyruvate = 5-O-(1-carboxyvinyl)-3-phosphoshikimate + phosphate. The protein operates within metabolic intermediate biosynthesis; chorismate biosynthesis. In terms of biological role, catalyzes the transfer of the enolpyruvyl moiety of phosphoenolpyruvate (PEP) to the 5-hydroxyl of shikimate-3-phosphate (S3P) to produce enolpyruvyl shikimate-3-phosphate and inorganic phosphate. The polypeptide is 3-phosphoshikimate 1-carboxyvinyltransferase (Saccharolobus islandicus (strain Y.G.57.14 / Yellowstone #1) (Sulfolobus islandicus)).